The chain runs to 359 residues: Peptide chain release factor 1 (359 aa).

Gln236 bears the N5-methylglutamine mark.

The protein belongs to the prokaryotic/mitochondrial release factor family. In terms of processing, methylated by PrmC. Methylation increases the termination efficiency of RF1.

The protein resides in the cytoplasm. In terms of biological role, peptide chain release factor 1 directs the termination of translation in response to the peptide chain termination codons UAG and UAA. The sequence is that of Peptide chain release factor 1 from Streptococcus pneumoniae serotype 19F (strain G54).